The chain runs to 829 residues: Periplasmic nitrate reductase (829 aa).

The tat-type signal signal peptide spans 1–30 (MKMTRRAFVKANAAASAAAVAGITLPASAA). Residues 41–97 (ITWDKAPCRFCGTGCSVLVGTQNGKVVATQGDPEAPVNKGLNCIKGYFLSKIMYGQD) form the 4Fe-4S Mo/W bis-MGD-type domain. Residues cysteine 48, cysteine 51, cysteine 55, and cysteine 83 each coordinate [4Fe-4S] cluster. Mo-bis(molybdopterin guanine dinucleotide) is bound by residues lysine 85, glutamine 152, asparagine 177, cysteine 181, 214–221 (WGSNMAEM), 245–249 (STYYH), 264–266 (QSD), methionine 374, glutamine 378, asparagine 484, 510–511 (SD), lysine 533, aspartate 560, and 718–727 (TGRVLEHWHT). Residue phenylalanine 794 participates in substrate binding. Residues asparagine 802 and lysine 819 each contribute to the Mo-bis(molybdopterin guanine dinucleotide) site.

Belongs to the prokaryotic molybdopterin-containing oxidoreductase family. NasA/NapA/NarB subfamily. Component of the periplasmic nitrate reductase NapAB complex composed of NapA and NapB. It depends on [4Fe-4S] cluster as a cofactor. Requires Mo-bis(molybdopterin guanine dinucleotide) as cofactor. Post-translationally, predicted to be exported by the Tat system. The position of the signal peptide cleavage has not been experimentally proven.

The protein localises to the periplasm. It carries out the reaction 2 Fe(II)-[cytochrome] + nitrate + 2 H(+) = 2 Fe(III)-[cytochrome] + nitrite + H2O. Its function is as follows. Catalytic subunit of the periplasmic nitrate reductase complex NapAB. Receives electrons from NapB and catalyzes the reduction of nitrate to nitrite. The sequence is that of Periplasmic nitrate reductase from Vibrio vulnificus (strain YJ016).